A 242-amino-acid chain; its full sequence is Segregation and condensation protein A (242 aa).

The protein belongs to the ScpA family. In terms of assembly, component of a cohesin-like complex composed of ScpA, ScpB and the Smc homodimer, in which ScpA and ScpB bind to the head domain of Smc. The presence of the three proteins is required for the association of the complex with DNA.

The protein localises to the cytoplasm. Functionally, participates in chromosomal partition during cell division. May act via the formation of a condensin-like complex containing Smc and ScpB that pull DNA away from mid-cell into both cell halves. This Streptococcus pneumoniae serotype 19F (strain G54) protein is Segregation and condensation protein A.